Consider the following 876-residue polypeptide: Leucine--tRNA ligase (876 aa).

Positions 42 to 52 (PYPSGKLHMGH) match the 'HIGH' region motif. Residues 634-638 (KMSKS) carry the 'KMSKS' region motif. K637 is a binding site for ATP.

Belongs to the class-I aminoacyl-tRNA synthetase family.

The protein resides in the cytoplasm. It carries out the reaction tRNA(Leu) + L-leucine + ATP = L-leucyl-tRNA(Leu) + AMP + diphosphate. The protein is Leucine--tRNA ligase of Neisseria meningitidis serogroup C (strain 053442).